A 325-amino-acid polypeptide reads, in one-letter code: MSETATWQPSASIPNLLKRAAIMTEIRRFFADRGVLEVETPCMSQATVTDIHLVPFETRFVGPGHSQGMNLWLMTSPEYHMKRLLVAGCGPIFQLCRSFRNEEMGRHHNPEFTMLEWYRPHYDMYRLMNEVDDLLQQVLDCAPAESLSYQQAFQRYLEIDPLSADKAQLREAAAKLDLSNVADEEEDRDTLLQLLFTFGVEPNIGKEKPTFVYHFPASQASLAQISTEDHRVAERFEVYYKGIELANGFHELTDAREQEQRFEQDNRKRAARGLPQHPIDHNLIEALKVGMPDCSGVALGVDRLVMLALGAERLSDVIAFSVDRA.

A substrate-binding site is contributed by 76–78 (SPE). Residues 100–102 (RNE) and Asn109 each bind ATP. Tyr118 provides a ligand contact to substrate. 244–245 (EL) lines the ATP pocket. Glu251 provides a ligand contact to substrate. Position 300 (Gly300) interacts with ATP.

It belongs to the class-II aminoacyl-tRNA synthetase family. EpmA subfamily. Homodimer.

It carries out the reaction D-beta-lysine + L-lysyl-[protein] + ATP = N(6)-((3R)-3,6-diaminohexanoyl)-L-lysyl-[protein] + AMP + diphosphate + H(+). Functionally, with EpmB is involved in the beta-lysylation step of the post-translational modification of translation elongation factor P (EF-P) on 'Lys-34'. Catalyzes the ATP-dependent activation of (R)-beta-lysine produced by EpmB, forming a lysyl-adenylate, from which the beta-lysyl moiety is then transferred to the epsilon-amino group of EF-P 'Lys-34'. The polypeptide is Elongation factor P--(R)-beta-lysine ligase (Escherichia fergusonii (strain ATCC 35469 / DSM 13698 / CCUG 18766 / IAM 14443 / JCM 21226 / LMG 7866 / NBRC 102419 / NCTC 12128 / CDC 0568-73)).